Consider the following 1314-residue polypeptide: AT-rich interactive domain-containing protein 4B (1314 aa).

2 disordered regions span residues 123–169 and 266–306; these read LPLT…RKQT and KTEL…EPFP. Phosphoserine occurs at positions 276, 295, and 296. The segment covering 277-305 has biased composition (acidic residues); the sequence is EAEEEEEEEDDEKEKEDNSSEEEEEIEPF. Residues 306 to 398 form the ARID domain; sequence PEERENFLQQ…YLYGFEEYCR (93 aa). Residues Lys428 and Lys461 each participate in a glycyl lysine isopeptide (Lys-Gly) (interchain with G-Cter in SUMO2) cross-link. Over residues 439-464 the composition is skewed to basic and acidic residues; it reads NVEDSKNVMPKEETPAEDESERKENI. 5 disordered regions span residues 439–577, 635–678, 709–888, 943–1215, and 1256–1290; these read NVED…KVQV, IKHR…SPEM, ASES…EEKR, KELF…RLPK, and VASI…SITA. Ser482 carries the post-translational modification Phosphoserine. A compositionally biased stretch (basic and acidic residues) spans 486–511; that stretch reads KEAHITKLEENENLEDKDGGRARTEE. The segment covering 531–567 has biased composition (acidic residues); sequence NKEEDEDDEEIEEEEEEDEEEDEDEDDDDNNEEEEFE. Residues 572–624 enclose the Tudor-knot domain; sequence GMKVQVRYGRGKNQKMYEASIKDSDVEGGEALYLVHYCGWNVRYDEWIKADKI. Basic and acidic residues predominate over residues 643-656; sequence NKLDKEKDRDEKYS. Ser666, Ser668, Ser675, and Ser717 each carry phosphoserine. Composition is skewed to basic and acidic residues over residues 722–754 and 778–787; these read ERCT…KEEQ and SPERLRKDME. Lys751 is covalently cross-linked (Glycyl lysine isopeptide (Lys-Gly) (interchain with G-Cter in SUMO2)). A phosphoserine mark is found at Ser778 and Ser790. The segment covering 788–800 has biased composition (acidic residues); that stretch reads AISEDTDFEEEDE. Residue Thr793 is modified to Phosphothreonine. Basic and acidic residues-rich tracts occupy residues 808 to 817, 841 to 853, and 997 to 1012; these read VKKDTTDKAL, GKKE…KEPL, and KPIE…RKTE. Positions 1013–1023 are enriched in polar residues; the sequence is FPSSGSNSVLN. Phosphoserine is present on Ser1016. At Thr1028 the chain carries Phosphothreonine. The span at 1030–1051 shows a compositional bias: low complexity; sequence ESPSSVTITEASQQQSSVTVSV. Ser1031 is modified (phosphoserine). Positions 1058–1067 are enriched in basic and acidic residues; the sequence is EEVRSIKSET. The segment covering 1089 to 1103 has biased composition (low complexity); that stretch reads SSPAGFDASVSSSSS. Basic residues predominate over residues 1132–1150; the sequence is KKQKRSHKATVVNNKKKGK. Thr1152 is modified (phosphothreonine). Phosphoserine is present on residues Ser1154, Ser1155, Ser1157, and Ser1161. A compositionally biased stretch (polar residues) spans 1164-1186; it reads ESVTKTQTIKSVPTGMKTHNSKS. A compositionally biased stretch (basic and acidic residues) spans 1198-1210; that stretch reads RNGDKDPDLKEPS. Residues 1227 to 1272 are a coiled coil; that stretch reads ENMTSAERISILQEKLQEIRKHYLSLKSEVASIDRRRKRLKKKERE. Over residues 1274 to 1290 the composition is skewed to low complexity; sequence AATSSSSSSPSSSSITA.

Component of a Sin3A corepressor complex consisting of SIN3A, SAP130, SUDS3/SAP45, SAP180, HDAC1 and HDAC2. Interacts with ARID4A. Interacts with AR. Expressed in Sertoli cells of the testis.

The protein resides in the nucleus. Functionally, acts as a transcriptional repressor. May function in the assembly and/or enzymatic activity of the Sin3A corepressor complex or in mediating interactions between the complex and other regulatory complexes. Plays a role in the regulation of epigenetic modifications at the PWS/AS imprinting center near the SNRPN promoter, where it might function as part of a complex with RB1 and ARID4A. Involved in spermatogenesis, together with ARID4A, where it functions as a transcriptional coactivator for AR (androgen receptor) and enhances expression of genes required for sperm maturation. Regulates expression of the tight junction protein CLDN3 in the testis, which is important for integrity of the blood-testis barrier. Plays a role in myeloid homeostasis where it regulates the histone methylation state of bone marrow cells and expression of various genes involved in hematopoiesis. May function as a leukemia suppressor. This chain is AT-rich interactive domain-containing protein 4B (Arid4b), found in Mus musculus (Mouse).